We begin with the raw amino-acid sequence, 361 residues long: 1D-myo-inositol 2-acetamido-2-deoxy-alpha-D-glucopyranoside deacetylase (361 aa).

The span at 1 to 12 (MTTTPQPPPQPD) shows a compositional bias: pro residues. The segment at 1–27 (MTTTPQPPPQPDETPEGAAGAATAGRD) is disordered. Residues 16–25 (EGAAGAATAG) are compositionally biased toward low complexity. The Zn(2+) site is built by H66, D69, and H207.

It belongs to the MshB deacetylase family. Requires Zn(2+) as cofactor.

It carries out the reaction 1D-myo-inositol 2-acetamido-2-deoxy-alpha-D-glucopyranoside + H2O = 1D-myo-inositol 2-amino-2-deoxy-alpha-D-glucopyranoside + acetate. In terms of biological role, catalyzes the deacetylation of 1D-myo-inositol 2-acetamido-2-deoxy-alpha-D-glucopyranoside (GlcNAc-Ins) in the mycothiol biosynthesis pathway. This chain is 1D-myo-inositol 2-acetamido-2-deoxy-alpha-D-glucopyranoside deacetylase, found in Kineococcus radiotolerans (strain ATCC BAA-149 / DSM 14245 / SRS30216).